The following is a 693-amino-acid chain: Elongation factor G (693 aa).

The tr-type G domain maps to A8–L282. GTP is bound by residues A17–T24, D81–H85, and N135–D138.

This sequence belongs to the TRAFAC class translation factor GTPase superfamily. Classic translation factor GTPase family. EF-G/EF-2 subfamily.

Its subcellular location is the cytoplasm. Catalyzes the GTP-dependent ribosomal translocation step during translation elongation. During this step, the ribosome changes from the pre-translocational (PRE) to the post-translocational (POST) state as the newly formed A-site-bound peptidyl-tRNA and P-site-bound deacylated tRNA move to the P and E sites, respectively. Catalyzes the coordinated movement of the two tRNA molecules, the mRNA and conformational changes in the ribosome. This Streptococcus thermophilus (strain CNRZ 1066) protein is Elongation factor G.